A 253-amino-acid polypeptide reads, in one-letter code: uncharacterized protein (253 aa).

Residues 4–73 (FGKSTADRVK…IDVSGVTVLQ (70 aa)) enclose the BON 1 domain. Residues 79–93 (AAQTAPTTPAQTSPS) show a composition bias toward low complexity. A disordered region spans residues 79 to 105 (AAQTAPTTPAQTSPSVQDSPSTPVQMP). In terms of domain architecture, BON 2 spans 119 to 188 (DTSRIAKAVL…VDISGLRVAQ (70 aa)). Residues 204–251 (TVYTVKPGDSLSKIAEHYYGDQMEYKKIAHYNNISNPDLIQPGQKLRI) enclose the LysM domain.

This is an uncharacterized protein from Deinococcus radiodurans (strain ATCC 13939 / DSM 20539 / JCM 16871 / CCUG 27074 / LMG 4051 / NBRC 15346 / NCIMB 9279 / VKM B-1422 / R1).